Consider the following 72-residue polypeptide: UPF0352 protein swp_2271 (72 aa).

Belongs to the UPF0352 family.

This Shewanella piezotolerans (strain WP3 / JCM 13877) protein is UPF0352 protein swp_2271.